The primary structure comprises 309 residues: Olfactory receptor 10J5 (309 aa).

Residues 1–27 (MQRNNFTEVIEFVFLGFSSFGKHQITL) lie on the Extracellular side of the membrane. The chain crosses the membrane as a helical span at residues 28 to 48 (FVVFLTIYILTLAGNIIIVTI). At 49 to 57 (THIDHHLHT) the chain is on the cytoplasmic side. The chain crosses the membrane as a helical span at residues 58–78 (PMYFFLSMLASSETVYTLVIV). Residues 79 to 84 (PRMLSS) are Extracellular-facing. Residues 85-105 (LIFYNLPISLAGCATQMFFFV) form a helical membrane-spanning segment. A disulfide bridge links Cys-97 with Cys-178. Over 106-131 (TLATNNCFLLTAMGYDRYVAICNPLR) the chain is Cytoplasmic. Residues 132 to 152 (YTIIMSKGMCALLVCGSLGTG) form a helical membrane-spanning segment. The Extracellular portion of the chain corresponds to 153 to 203 (LVMAVLHVPAMFHLPFCGTVVEHFFCDIYPVMKLSCVDTTVNEIINYGVSS). Residues 204 to 224 (FVILVPIGLIFISYVLIVSSI) form a helical membrane-spanning segment. The Cytoplasmic segment spans residues 225–235 (LKIVSTEGQKK). Residues 236–256 (AFATCASHLTVVIVHYGCASI) form a helical membrane-spanning segment. The Extracellular segment spans residues 257 to 270 (AYLKPKSESSVEKD). Residues 271–291 (LLLSVTYTIITPLLNPVVYSL) traverse the membrane as a helical segment. Over 292–309 (RNKEVKDALCRAVGRNTS) the chain is Cytoplasmic.

It belongs to the G-protein coupled receptor 1 family. In terms of tissue distribution, expressed in the olfactory epithelium as well as in the testis. Expressed in round spermatids during stages VI-VIII of spermatogenesis.

It localises to the cell membrane. Its function is as follows. Olfactory receptor. Activated by the synthetic floral odorant, lyral, and by alpha-cedrene, a sesquiterpene constituent of cedarwood oil. Its activation increases intracellular Ca(2+). Acts as a key regulator of myogenesis through its actions on cell migration and adhesion by activating the Ca(2+)-dependent AKT signal transduction pathway. Also acts as a regulator of angiogenesis. Moreover, plays a role in the regulation of lipid accumulation in hepatocytes via the cAMP-PKA pathway. Involved in sperm chemotaxis and motility. In Mus musculus (Mouse), this protein is Olfactory receptor 10J5.